Reading from the N-terminus, the 139-residue chain is Fluoroacetyl-CoA thioesterase (139 aa).

Substrate is bound by residues 40 to 50 (FATGFMVGLME) and Gly-69. Residues Thr-42 and Glu-50 contribute to the active site. Residues Gly-69 and 76–77 (HT) each bind CoA. The active site involves His-76. Residue Arg-120 coordinates substrate.

In terms of assembly, homodimer.

It carries out the reaction fluoroacetyl-CoA + H2O = fluoroacetate + CoA + H(+). Functionally, hydrolyzes fluoroacetyl-CoA before it can react with citrate synthase, and thus confers fluoroacetate resistance. Cannot use acetyl-CoA as substrate. This Streptantibioticus cattleyicolor (Streptomyces cattleya) protein is Fluoroacetyl-CoA thioesterase (flK).